Here is a 117-residue protein sequence, read N- to C-terminus: UPF0295 protein GTNG_0491 (117 aa).

A run of 2 helical transmembrane segments spans residues 12 to 32 (IRTF…LGLF) and 42 to 62 (LFMV…FWIG).

This sequence belongs to the UPF0295 family.

It is found in the cell membrane. The polypeptide is UPF0295 protein GTNG_0491 (Geobacillus thermodenitrificans (strain NG80-2)).